The sequence spans 303 residues: Methyltransferase ktnA (303 aa).

Belongs to the class I-like SAM-binding methyltransferase superfamily. Requires S-adenosyl-L-methionine as cofactor.

Non-reducing polyketide synthase; part of the gene cluster that mediates the biosynthesis of the bicoumarin kotanin. The non-reducing polyketide synthase ktnS first catalyzes the formation of the pentaketidic 4,7-dihydroxy-5-methylcoumarin from acetyl coenzyme A and 4 malonyl coenzyme A molecules. Further O-methylation by ktnB leads to the formation of 7-demethylsiderin. Then, an oxidative phenol coupling catalyzed by the cytochrome P450 monooxygenase ktnC forms the 8,8'-dimer P-orlandin via dimerization the monomeric precursor, 7-demethylsiderin. P-orlandin is subsequently O-methylated in a stepwise fashion to demethylkotanin and kotanin. The function of ktnA within the pathway has not been determined yet. This Aspergillus niger (strain ATCC MYA-4892 / CBS 513.88 / FGSC A1513) protein is Methyltransferase ktnA.